The primary structure comprises 379 residues: uncharacterized protein (379 aa).

This sequence belongs to the glycosyltransferase 28 family.

This is an uncharacterized protein from Methanosarcina mazei (strain ATCC BAA-159 / DSM 3647 / Goe1 / Go1 / JCM 11833 / OCM 88) (Methanosarcina frisia).